The sequence spans 209 residues: Ras-like protein (209 aa).

15–22 contacts GTP; it reads GGGGEGKS. An Effector region motif is present at residues 37-45; the sequence is YDPTIEESY. Residues 62 to 66 and 121 to 124 contribute to the GTP site; these read DTAGQ and NKCD. 2 S-palmitoyl cysteine lipidation sites follow: Cys-202 and Cys-203. Cys-206 carries the post-translational modification Cysteine methyl ester. The S-geranylgeranyl cysteine moiety is linked to residue Cys-206. The propeptide at 207–209 is removed in mature form; that stretch reads IVM.

It belongs to the small GTPase superfamily. Ras family.

It localises to the cell membrane. The catalysed reaction is GTP + H2O = GDP + phosphate + H(+). Its activity is regulated as follows. Alternates between an inactive form bound to GDP and an active form bound to GTP. Activated by a guanine nucleotide-exchange factor (GEF) and inactivated by a GTPase-activating protein (GAP). In Laccaria bicolor (Bicoloured deceiver), this protein is Ras-like protein.